The sequence spans 549 residues: Oxygen-dependent choline dehydrogenase (549 aa).

4 to 33 (DFVIIGSGSAGSALAYRLSEGGKNSVIVIE) is an FAD binding site. H465 acts as the Proton acceptor in catalysis.

Belongs to the GMC oxidoreductase family. FAD is required as a cofactor.

The catalysed reaction is choline + A = betaine aldehyde + AH2. The enzyme catalyses betaine aldehyde + NAD(+) + H2O = glycine betaine + NADH + 2 H(+). Its pathway is amine and polyamine biosynthesis; betaine biosynthesis via choline pathway; betaine aldehyde from choline (cytochrome c reductase route): step 1/1. Involved in the biosynthesis of the osmoprotectant glycine betaine. Catalyzes the oxidation of choline to betaine aldehyde and betaine aldehyde to glycine betaine at the same rate. The polypeptide is Oxygen-dependent choline dehydrogenase (Rhizobium johnstonii (strain DSM 114642 / LMG 32736 / 3841) (Rhizobium leguminosarum bv. viciae)).